Consider the following 150-residue polypeptide: C-type lectin mosGCTL-7 (150 aa).

The signal sequence occupies residues 1 to 17 (MQLVHVLVVLLSVVAHA). The C-type lectin domain maps to 18–140 (KKFFIPNLKA…CRGFKAYIVC (123 aa)). Residue Asn-67 is glycosylated (N-linked (GlcNAc...) asparagine). The cysteines at positions 111 and 131 are disulfide-linked.

As to quaternary structure, interacts with putative receptor-type tyrosine-protein phosphatase mosPTP-1; the interaction probably mediates the recruitment of Japanese encephalitis virus particles in complex with C-type lectin mosGCTL-7 to the cell surface. In terms of assembly, (Microbial infection) Interacts with envelope protein E (glycosylated) of Japanese encephalitis virus in a calcium-dependent manner.

It is found in the secreted. Its function is as follows. Carbohydrate-binding protein. In terms of biological role, (Microbial infection) Facilitates Japanese encephalitis virus infection in mosquitoes probably via capturing viral particles and presenting them to a ligand on the cell surface, thereby facilitating viral entry. In Aedes aegypti (Yellowfever mosquito), this protein is C-type lectin mosGCTL-7.